Reading from the N-terminus, the 357-residue chain is Ribosomal RNA large subunit methyltransferase M (357 aa).

S-adenosyl-L-methionine contacts are provided by residues Ser183, 216-219, Asp235, Asp255, and Asp271; that span reads APGG. The active-site Proton acceptor is Lys300.

The protein belongs to the class I-like SAM-binding methyltransferase superfamily. RNA methyltransferase RlmE family. RlmM subfamily. Monomer.

It is found in the cytoplasm. It catalyses the reaction cytidine(2498) in 23S rRNA + S-adenosyl-L-methionine = 2'-O-methylcytidine(2498) in 23S rRNA + S-adenosyl-L-homocysteine + H(+). Its function is as follows. Catalyzes the 2'-O-methylation at nucleotide C2498 in 23S rRNA. In Pseudomonas savastanoi pv. phaseolicola (strain 1448A / Race 6) (Pseudomonas syringae pv. phaseolicola (strain 1448A / Race 6)), this protein is Ribosomal RNA large subunit methyltransferase M.